The primary structure comprises 303 residues: 2-dehydropantoate 2-reductase (303 aa).

Residues 7-12, Lys-78, Asn-103, and Ala-129 each bind NADP(+); that span reads GPGSLG. Lys-185 functions as the Proton donor in the catalytic mechanism. Residues Lys-185, Asn-189, Asn-193, Asn-203, and 252 to 255 each bind substrate; that span reads NESS. Glu-267 contacts NADP(+).

This sequence belongs to the ketopantoate reductase family.

Its subcellular location is the cytoplasm. It carries out the reaction (R)-pantoate + NAD(+) = 2-dehydropantoate + NADH + H(+). It catalyses the reaction (R)-pantoate + NADP(+) = 2-dehydropantoate + NADPH + H(+). It functions in the pathway cofactor biosynthesis; coenzyme A biosynthesis. In terms of biological role, catalyzes the NAD(P)H-dependent reduction of ketopantoate into pantoic acid. The protein is 2-dehydropantoate 2-reductase of Halobacterium salinarum (strain ATCC 700922 / JCM 11081 / NRC-1) (Halobacterium halobium).